Consider the following 248-residue polypeptide: Thioredoxin-like protein AAED1, chloroplastic (248 aa).

The N-terminal 52 residues, 1–52 (MAIALSSSSTITSITLQPKLKTIHGLGTVLPGYSVKSHFRSVSLRRSAVVVS), are a transit peptide targeting the chloroplast. Alanine 53 is subject to N-acetylalanine.

This sequence belongs to the peroxiredoxin-like PRXL2 family. PRXL2C subfamily.

It localises to the plastid. Its subcellular location is the chloroplast. The polypeptide is Thioredoxin-like protein AAED1, chloroplastic (Arabidopsis thaliana (Mouse-ear cress)).